A 347-amino-acid chain; its full sequence is Protein RecA (347 aa).

65 to 72 (GPESSGKT) provides a ligand contact to ATP.

It belongs to the RecA family.

It is found in the cytoplasm. Its function is as follows. Can catalyze the hydrolysis of ATP in the presence of single-stranded DNA, the ATP-dependent uptake of single-stranded DNA by duplex DNA, and the ATP-dependent hybridization of homologous single-stranded DNAs. It interacts with LexA causing its activation and leading to its autocatalytic cleavage. This is Protein RecA from Aliivibrio salmonicida (strain LFI1238) (Vibrio salmonicida (strain LFI1238)).